A 200-amino-acid polypeptide reads, in one-letter code: Cytochrome c biogenesis ATP-binding export protein CcmA (200 aa).

The 198-residue stretch at leucine 3 to alanine 200 folds into the ABC transporter domain. Glycine 35 to threonine 42 is an ATP binding site.

It belongs to the ABC transporter superfamily. CcmA exporter (TC 3.A.1.107) family. The complex is composed of two ATP-binding proteins (CcmA) and two transmembrane proteins (CcmB).

The protein resides in the cell inner membrane. It carries out the reaction heme b(in) + ATP + H2O = heme b(out) + ADP + phosphate + H(+). Part of the ABC transporter complex CcmAB involved in the biogenesis of c-type cytochromes; once thought to export heme, this seems not to be the case, but its exact role is uncertain. Responsible for energy coupling to the transport system. The protein is Cytochrome c biogenesis ATP-binding export protein CcmA of Rhodopseudomonas palustris (strain BisB5).